The chain runs to 131 residues: Profilin-3 (131 aa).

It belongs to the profilin family. Occurs in many kinds of cells as a complex with monomeric actin in a 1:1 ratio.

Its subcellular location is the cytoplasm. It is found in the cytoskeleton. In terms of biological role, binds to actin and affects the structure of the cytoskeleton. At high concentrations, profilin prevents the polymerization of actin, whereas it enhances it at low concentrations. By binding to PIP2, it inhibits the formation of IP3 and DG. The protein is Profilin-3 of Lilium longiflorum (Trumpet lily).